The chain runs to 598 residues: Elongation factor 4 (598 aa).

Residues 4–185 (KNIRNFSIIA…TIITKIPAPK (182 aa)) form the tr-type G domain. Residues 16 to 21 (DHGKST) and 132 to 135 (NKID) contribute to the GTP site.

The protein belongs to the TRAFAC class translation factor GTPase superfamily. Classic translation factor GTPase family. LepA subfamily.

It localises to the cell inner membrane. It carries out the reaction GTP + H2O = GDP + phosphate + H(+). Its function is as follows. Required for accurate and efficient protein synthesis under certain stress conditions. May act as a fidelity factor of the translation reaction, by catalyzing a one-codon backward translocation of tRNAs on improperly translocated ribosomes. Back-translocation proceeds from a post-translocation (POST) complex to a pre-translocation (PRE) complex, thus giving elongation factor G a second chance to translocate the tRNAs correctly. Binds to ribosomes in a GTP-dependent manner. The polypeptide is Elongation factor 4 (Campylobacter jejuni subsp. jejuni serotype O:2 (strain ATCC 700819 / NCTC 11168)).